Consider the following 327-residue polypeptide: UDP-glucose 4-epimerase (327 aa).

Residue Thr119 coordinates substrate. Catalysis depends on Tyr143, which acts as the Proton acceptor.

This sequence belongs to the NAD(P)-dependent epimerase/dehydratase family. NAD(+) is required as a cofactor.

The enzyme catalyses UDP-alpha-D-glucose = UDP-alpha-D-galactose. The protein operates within carbohydrate metabolism; galactose metabolism. It functions in the pathway glycan metabolism; exopolysaccharide biosynthesis. The chain is UDP-glucose 4-epimerase (exoB) from Rhizobium leguminosarum bv. trifolii.